Reading from the N-terminus, the 273-residue chain is Putative pyruvate, phosphate dikinase regulatory protein (273 aa).

Residue 149-156 (GPSRTSKT) participates in ADP binding.

This sequence belongs to the pyruvate, phosphate/water dikinase regulatory protein family. PDRP subfamily.

It catalyses the reaction N(tele)-phospho-L-histidyl/L-threonyl-[pyruvate, phosphate dikinase] + ADP = N(tele)-phospho-L-histidyl/O-phospho-L-threonyl-[pyruvate, phosphate dikinase] + AMP + H(+). The catalysed reaction is N(tele)-phospho-L-histidyl/O-phospho-L-threonyl-[pyruvate, phosphate dikinase] + phosphate + H(+) = N(tele)-phospho-L-histidyl/L-threonyl-[pyruvate, phosphate dikinase] + diphosphate. Its function is as follows. Bifunctional serine/threonine kinase and phosphorylase involved in the regulation of the pyruvate, phosphate dikinase (PPDK) by catalyzing its phosphorylation/dephosphorylation. This Rickettsia rickettsii (strain Iowa) protein is Putative pyruvate, phosphate dikinase regulatory protein.